We begin with the raw amino-acid sequence, 106 residues long: ATP-dependent Clp protease adapter protein ClpS (106 aa).

It belongs to the ClpS family. Binds to the N-terminal domain of the chaperone ClpA.

Involved in the modulation of the specificity of the ClpAP-mediated ATP-dependent protein degradation. The sequence is that of ATP-dependent Clp protease adapter protein ClpS from Enterobacter sp. (strain 638).